A 132-amino-acid chain; its full sequence is Thioredoxin H4-2 (132 aa).

In terms of domain architecture, Thioredoxin spans 18-130 (DFKGGNVHVI…LEKKVQALAD (113 aa)). Catalysis depends on nucleophile residues Cys-56 and Cys-59. An intrachain disulfide couples Cys-56 to Cys-59.

Belongs to the thioredoxin family. Plant H-type subfamily.

The protein localises to the cytoplasm. Its function is as follows. Probable thiol-disulfide oxidoreductase that may be involved in the redox regulation of a number of cytosolic enzymes. The polypeptide is Thioredoxin H4-2 (Oryza sativa subsp. japonica (Rice)).